Reading from the N-terminus, the 557-residue chain is Dihydroxy-acid dehydratase (557 aa).

Residue Cys-47 coordinates [2Fe-2S] cluster. A Mg(2+)-binding site is contributed by Asp-79. Residue Cys-120 coordinates [2Fe-2S] cluster. Mg(2+) contacts are provided by Asp-121 and Lys-122. An N6-carboxylysine modification is found at Lys-122. Cys-192 provides a ligand contact to [2Fe-2S] cluster. Glu-444 is a binding site for Mg(2+). Residue Ser-470 is the Proton acceptor of the active site.

The protein belongs to the IlvD/Edd family. As to quaternary structure, homodimer. [2Fe-2S] cluster serves as cofactor. Mg(2+) is required as a cofactor.

The catalysed reaction is (2R)-2,3-dihydroxy-3-methylbutanoate = 3-methyl-2-oxobutanoate + H2O. It carries out the reaction (2R,3R)-2,3-dihydroxy-3-methylpentanoate = (S)-3-methyl-2-oxopentanoate + H2O. Its pathway is amino-acid biosynthesis; L-isoleucine biosynthesis; L-isoleucine from 2-oxobutanoate: step 3/4. It functions in the pathway amino-acid biosynthesis; L-valine biosynthesis; L-valine from pyruvate: step 3/4. Functions in the biosynthesis of branched-chain amino acids. Catalyzes the dehydration of (2R,3R)-2,3-dihydroxy-3-methylpentanoate (2,3-dihydroxy-3-methylvalerate) into 2-oxo-3-methylpentanoate (2-oxo-3-methylvalerate) and of (2R)-2,3-dihydroxy-3-methylbutanoate (2,3-dihydroxyisovalerate) into 2-oxo-3-methylbutanoate (2-oxoisovalerate), the penultimate precursor to L-isoleucine and L-valine, respectively. In Synechococcus sp. (strain CC9605), this protein is Dihydroxy-acid dehydratase.